Reading from the N-terminus, the 631-residue chain is 1,4-alpha-glucan branching enzyme GlgB (631 aa).

The active-site Nucleophile is the Asp-309. Glu-362 (proton donor) is an active-site residue.

The protein belongs to the glycosyl hydrolase 13 family. GlgB subfamily. As to quaternary structure, monomer.

The catalysed reaction is Transfers a segment of a (1-&gt;4)-alpha-D-glucan chain to a primary hydroxy group in a similar glucan chain.. Its pathway is glycan biosynthesis; glycogen biosynthesis. Catalyzes the formation of the alpha-1,6-glucosidic linkages in glycogen by scission of a 1,4-alpha-linked oligosaccharide from growing alpha-1,4-glucan chains and the subsequent attachment of the oligosaccharide to the alpha-1,6 position. In Marinobacter nauticus (strain ATCC 700491 / DSM 11845 / VT8) (Marinobacter aquaeolei), this protein is 1,4-alpha-glucan branching enzyme GlgB.